We begin with the raw amino-acid sequence, 358 residues long: HLA class I histocompatibility antigen, alpha chain E (358 aa).

Residues 1-21 (MVDGTLLLLLSEALALTQTWA) form the signal peptide. Residues 22–111 (GSHSLKYFHT…LRGYYNQSEA (90 aa)) form an alpha-1 region. Topologically, residues 22–305 (GSHSLKYFHT…KPASQPTIPI (284 aa)) are extracellular. Tyr28, Glu84, Ser87, Asn98, and Tyr105 together coordinate a peptide antigen. Asn107 carries an N-linked (GlcNAc...) asparagine glycan. The interval 112–203 (GSHTLQWMHG…EKGKETLLHL (92 aa)) is alpha-2. Cys122 and Cys185 are oxidised to a cystine. Ser164, Lys167, Gln177, Tyr180, and Tyr192 together coordinate a peptide antigen. The alpha-3 stretch occupies residues 204–295 (EPPKTHVTHH…GLPEPVTLRW (92 aa)). The Ig-like C1-type domain occupies 206-294 (PKTHVTHHPI…EGLPEPVTLR (89 aa)). A disulfide bond links Cys224 and Cys280. The tract at residues 296–305 (KPASQPTIPI) is connecting peptide. A helical transmembrane segment spans residues 306–329 (VGIIAGLVLLGSVVSGAVVAAVIW). The Cytoplasmic portion of the chain corresponds to 330 to 358 (RKKSSGGKGGSYSKAEWSDSAQGSESHSL). The segment at 333-358 (SSGGKGGSYSKAEWSDSAQGSESHSL) is disordered. Positions 348-358 (DSAQGSESHSL) are enriched in polar residues. The residue at position 353 (Ser353) is a Phosphoserine.

It belongs to the MHC class I family. Forms a heterotrimer with B2M and a self- or a pathogen-derived peptide (peptide-bound HLA-E-B2M). Similarly to MHC class Ia assembly, HLA-E-B2M heterodimer interacts with components of the antigen processing machinery TAPBP and TAP1-TAP2 complex; this interaction is required for peptide loading and translocation to the cell surface. Interacts with CALCR; this interaction is required for appropriate folding. The optimum binding peptide is a nonamer (VL9) that is primarily derived from amino-acid residues 3-11 of the signal sequences of most HLA-A, -B, -C and -G molecules. The VL9 peptide anchors to five main sites in the peptide-binding groove of HLA-E. Peptide-bound HLA-E-B2M complex interacts with KLRD1-KLRC1 receptor on NK cells. Binds with lower affinity to activating KLRD1-KLRC2. The common subunit KLRC1 plays a prominent role in directly interacting with HLA-E. Peptide-bound HLA-E-B2M interacts with the alpha-beta TCR on unconventional CD8+ T cells. Peptide-free HLA-E interacts with HLA-F-B2M complex; this interaction may regulate the intracellular trafficking and the stability of peptide-free MHC class I open conformers (OCs). Post-translationally, N-glycosylated. In terms of processing, the soluble form (sHLA-E) can be partly produced by proteolytic cleavage at the cell surface (shedding) by a matrix metalloproteinase. Alternative splicing is also suggested as a mechanism for generation of sHLA-E, although it remains to be proved. As to expression, expressed in secretory endometrial cells during pregnancy (at protein level). The expression in nonlymphoid tissues is restricted to endothelial cells from all types of vessels, including arteries, veins, capillaries, and lymphatics (at protein level). In lymphoid organs, it is mainly expressed in endothelial venules, B and T cells, monocytes, macrophages, NK cells and megakaryocytes (at protein level).

It localises to the cell membrane. The protein localises to the golgi apparatus membrane. The protein resides in the secreted. Its function is as follows. Non-classical major histocompatibility class Ib molecule involved in immune self-nonself discrimination. In complex with B2M/beta-2-microglobulin binds nonamer self-peptides derived from the signal sequence of classical MHC class Ia molecules (VL9 peptides - VMAPRT[V/L][L/V/I/F]L). Peptide-bound HLA-E-B2M heterotrimeric complex primarily functions as a ligand for natural killer (NK) cell inhibitory receptor KLRD1-KLRC1, enabling NK cells to monitor the expression of other MHC class I molecules in healthy cells and to tolerate self. Upon cellular stress, preferentially binds signal sequence-derived peptides from stress-induced chaperones and is no longer recognized by NK cell inhibitory receptor KLRD1-KLRC1, resulting in impaired protection from NK cells. Binds signal sequence-derived peptides from non-classical MHC class Ib HLA-G molecules and acts as a ligand for NK cell activating receptor KLRD1-KLRC2, likely playing a role in the generation and effector functions of adaptive NK cells and in maternal-fetal tolerance during pregnancy. Besides self-peptides, can also bind and present pathogen-derived peptides conformationally similar to VL9 peptides to alpha-beta T cell receptor (TCR) on unconventional CD8-positive cytotoxic T cells, ultimately triggering antimicrobial immune response. Presents HIV gag peptides (immunodominant KAFSPEVIPMF and subdominant KALGPAATL epitopes) predominantly to CD8-positive T cell clones expressing a TRAV17-containing TCR, triggering HLA-E-restricted T cell responses. Presents mycobacterial peptides to HLA-E-restricted CD8-positive T cells eliciting both cytotoxic and immunoregulatory functions. Functionally, (Microbial infection) Viruses like human cytomegalovirus have evolved an escape mechanism whereby virus-induced down-regulation of host MHC class I molecules is coupled to the binding of viral peptides to HLA-E, restoring HLA-E expression and inducing HLA-E-dependent NK cell immune tolerance to infected cells. (Microbial infection) May bind HIV-1 gag/Capsid protein p24-derived peptide (AISPRTLNA) on infected cells and may inhibit NK cell cytotoxicity, a mechanism that allows HIV-1 to escape immune recognition. In terms of biological role, (Microbial infection) Upon SARS-CoV-2 infection, may contribute to functional exhaustion of cytotoxic NK cells and CD8-positive T cells. Binds SARS-CoV-2 S/Spike protein S1-derived peptide (LQPRTFLL) expressed on the surface of lung epithelial cells, inducing NK cell exhaustion and dampening of antiviral immune surveillance. The polypeptide is HLA class I histocompatibility antigen, alpha chain E (Homo sapiens (Human)).